The chain runs to 75 residues: UPF0352 protein VV1_3121 (75 aa).

Belongs to the UPF0352 family.

This is UPF0352 protein VV1_3121 from Vibrio vulnificus (strain CMCP6).